Consider the following 426-residue polypeptide: MDLQITCTEIIKPSSPTPQHQSTYKLSIIDQLTPNVYFSIILLYSNAGESTAKTSDHLKKSLSNTLTHYYPLAGQLKYDQLIVDCNDQGVPFIEAHVANDMRQLLKIPNIDVLEQLLPFKPHEGFDSDRSNLTLQVNYFGCGGMAIGLCFRHKVIDATTAAFFVKNWGVIARGAGEIKDLIIDHASLFPARDLSCLAKSVDEEFLKPESETKRFVFDGPTIASFQETFTSFERRPTRFEVVSAVILGALITATRESDDESNVPERLDTIISVNLRQRMNPPFPEHCMGNIISGGLVYWPLEKKVDYGCLAKEIHESIKKVDDQFARKFYGDAEFLNLPRLAGAEDVKKREFWVTSWCKTPLYEADFGWGNPKWAGNSMRLNQITVFFDSSDGEGVEAWVGLPRKDMARFEKDSGILAYTSPNPSIF.

Residues H152 and D365 each act as proton acceptor in the active site.

The protein belongs to the plant acyltransferase family. In terms of assembly, monomer. As to expression, expressed in maturing fruits and in juice vesicles.

It catalyses the reaction isomeliandiol + acetyl-CoA = 21-O-acetyl-isomeliandiol + CoA. The protein operates within secondary metabolite biosynthesis; terpenoid biosynthesis. Its function is as follows. Acetyltransferase involved in the biosynthesis of limonoids triterpene natural products such as limonin, a compound with insecticidal activity responsible for the bitter taste in citrus. Catalyzes the formation of 21-O-acetyl-isomeliandiol from isomeliandiol. The sequence is that of Limonoid 21-O-acetyltransferse from Citrus sinensis (Sweet orange).